The primary structure comprises 571 residues: Double-stranded RNA-binding protein Staufen homolog 2 (571 aa).

A DRBM 1 domain is found at 8–75 (TPMCLVNELA…ANKALTESTL (68 aa)). Phosphoserine occurs at positions 9 and 13. Phosphothreonine is present on R18. At S21 the chain carries Phosphoserine. Disordered regions lie at residues 71–94 (TESTLPKPVQKPPKSNVNNNPGSI) and 178–203 (ALQNEPIPEKSPQNGESGKEMDDDKD). The span at 83 to 94 (PKSNVNNNPGSI) shows a compositional bias: polar residues. Residues 95–181 (TPTVELNGLA…AMKALQALQN (87 aa)) enclose the DRBM 2 domain. Position 188 is a phosphoserine (S188). Basic and acidic residues predominate over residues 194 to 203 (SGKEMDDDKD). DRBM domains lie at 207–274 (SEIS…ELKK) and 307–375 (NPIS…QLGY). 2 consecutive short sequence motifs (nuclear localization signal) follow at residues 273 to 317 (KKLP…QIQQ) and 373 to 412 (LGYKASTSLQDQLDKTGENKGWSGPKPGFPEPANNTPKGI). Positions 381 to 571 (LQDQLDKTGE…QDCKKSKSVI (191 aa)) are required for dendritic transport. A disordered region spans residues 382–413 (QDQLDKTGENKGWSGPKPGFPEPANNTPKGIL). Phosphoserine occurs at positions 395, 416, 426, 440, 456, and 493. Residues 546 to 571 (LREKADNNQANPGSITQDCKKSKSVI) form a disordered region. Polar residues predominate over residues 552 to 562 (NNQANPGSITQ).

As to quaternary structure, identified in a mRNP complex, at least composed of DHX9, DDX3X, ELAVL1, HNRNPU, IGF2BP1, ILF3, PABPC1, PCBP2, PTBP2, STAU1, STAU2, SYNCRIP and YBX1. Interacts with the exportin XPO5. This requires RNA and RAN bound to GTP. Interacts with microtubules. Isoform 2 and isoform 3 may also interact with ribosomes, and this association is independent of translation. Interacts with TRIM71 (via NHL repeats) in an RNA-dependent manner. As to expression, expressed in both somata and dendrites of hippocampal neurons.

The protein localises to the nucleus. Its subcellular location is the nucleolus. It localises to the cytoplasm. It is found in the endoplasmic reticulum. RNA-binding protein required for the microtubule-dependent transport of neuronal RNA from the cell body to the dendrite. As protein synthesis occurs within the dendrite, the localization of specific mRNAs to dendrites may be a prerequisite for neurite outgrowth and plasticity at sites distant from the cell body. The chain is Double-stranded RNA-binding protein Staufen homolog 2 (Stau2) from Rattus norvegicus (Rat).